Here is a 380-residue protein sequence, read N- to C-terminus: Acetylornithine deacetylase (380 aa).

His79 provides a ligand contact to Zn(2+). Residue Asp81 is part of the active site. Zn(2+) is bound at residue Asp109. The active site involves Glu139. The Zn(2+) site is built by Glu140, Glu164, and His351.

Belongs to the peptidase M20A family. ArgE subfamily. As to quaternary structure, homodimer. Requires Zn(2+) as cofactor. Co(2+) serves as cofactor. The cofactor is glutathione.

The protein localises to the cytoplasm. It carries out the reaction N(2)-acetyl-L-ornithine + H2O = L-ornithine + acetate. Its pathway is amino-acid biosynthesis; L-arginine biosynthesis; L-ornithine from N(2)-acetyl-L-ornithine (linear): step 1/1. In terms of biological role, catalyzes the hydrolysis of the amide bond of N(2)-acetylated L-amino acids. Cleaves the acetyl group from N-acetyl-L-ornithine to form L-ornithine, an intermediate in L-arginine biosynthesis pathway, and a branchpoint in the synthesis of polyamines. In Myxococcus xanthus, this protein is Acetylornithine deacetylase.